A 634-amino-acid chain; its full sequence is Sodium-dependent multivitamin transporter (634 aa).

12 helical membrane passes run 23-43, 65-85, 100-120, 142-162, 175-195, 207-227, 255-275, 295-315, 350-370, 403-423, 427-447, and 455-475; these read FSVV…VIGL, MGCL…VAIL, FLGC…IPVF, ICGT…ALYA, LWLS…LGGL, LIMF…VGGL, FWTL…VNQA, AVFP…LVMF, LPGL…SSAF, FAYG…GSVL, LSIF…GMFF, and AIVG…GSIV. N-linked (GlcNAc...) asparagine glycosylation is found at Asn-488 and Asn-497. Residues 526-546 traverse the membrane as a helical segment; it reads LWYSAHNSTTVIAVGLIVSLL.

It belongs to the sodium:solute symporter (SSF) (TC 2.A.21) family. As to quaternary structure, interacts with PDZD11. In terms of tissue distribution, expressed in the jejunum (at protein level). Expressed in lung, skeletal muscle, heart, brain, kidney, intestine, liver, and placenta.

It localises to the cell membrane. Its subcellular location is the apical cell membrane. The catalysed reaction is biotin(out) + 2 Na(+)(out) = biotin(in) + 2 Na(+)(in). It carries out the reaction (R)-pantothenate(out) + 2 Na(+)(out) = (R)-pantothenate(in) + 2 Na(+)(in). It catalyses the reaction (R)-lipoate(out) + 2 Na(+)(out) = (R)-lipoate(in) + 2 Na(+)(in). The enzyme catalyses iodide(out) + 2 Na(+)(out) = iodide(in) + 2 Na(+)(in). In terms of biological role, sodium-dependent multivitamin transporter that mediates the electrogenic transport of pantothenate, biotin, lipoate and iodide. Functions as a Na(+)-coupled substrate symporter where the stoichiometry of Na(+):substrate is 2:1, creating an electrochemical Na(+) gradient used as driving force for substrate uptake. Required for biotin and pantothenate uptake in the intestine across the brush border membrane. Plays a role in the maintenance of intestinal mucosa integrity, by providing the gut mucosa with biotin. Contributes to the luminal uptake of biotin and pantothenate into the brain across the blood-brain barrier. In Rattus norvegicus (Rat), this protein is Sodium-dependent multivitamin transporter.